A 1402-amino-acid polypeptide reads, in one-letter code: DNA-directed RNA polymerase subunit beta' (1402 aa).

Zn(2+)-binding residues include cysteine 71, cysteine 73, cysteine 86, and cysteine 89. Mg(2+) contacts are provided by aspartate 462, aspartate 464, and aspartate 466. Residues cysteine 811, cysteine 885, cysteine 892, and cysteine 895 each coordinate Zn(2+).

This sequence belongs to the RNA polymerase beta' chain family. The RNAP catalytic core consists of 2 alpha, 1 beta, 1 beta' and 1 omega subunit. When a sigma factor is associated with the core the holoenzyme is formed, which can initiate transcription. Mg(2+) is required as a cofactor. The cofactor is Zn(2+).

It catalyses the reaction RNA(n) + a ribonucleoside 5'-triphosphate = RNA(n+1) + diphosphate. DNA-dependent RNA polymerase catalyzes the transcription of DNA into RNA using the four ribonucleoside triphosphates as substrates. This Bartonella henselae (strain ATCC 49882 / DSM 28221 / CCUG 30454 / Houston 1) (Rochalimaea henselae) protein is DNA-directed RNA polymerase subunit beta'.